A 91-amino-acid chain; its full sequence is Probable Fe(2+)-trafficking protein (91 aa).

Belongs to the Fe(2+)-trafficking protein family.

In terms of biological role, could be a mediator in iron transactions between iron acquisition and iron-requiring processes, such as synthesis and/or repair of Fe-S clusters in biosynthetic enzymes. The polypeptide is Probable Fe(2+)-trafficking protein (Cellvibrio japonicus (strain Ueda107) (Pseudomonas fluorescens subsp. cellulosa)).